A 715-amino-acid polypeptide reads, in one-letter code: Phosphoribosylformylglycinamidine synthase subunit PurL (715 aa).

Histidine 33 is an active-site residue. Tyrosine 36 contacts ATP. Position 77 (glutamate 77) interacts with Mg(2+). Substrate contacts are provided by residues 78-81 (SHNH) and arginine 100. The active-site Proton acceptor is histidine 79. Aspartate 101 contributes to the Mg(2+) binding site. Substrate is bound at residue glutamine 225. Aspartate 253 serves as a coordination point for Mg(2+). Residue 297–299 (ESQ) coordinates substrate. Residues asparagine 475 and glycine 512 each contribute to the ATP site. Mg(2+) is bound at residue asparagine 513. Serine 515 is a binding site for substrate.

The protein belongs to the FGAMS family. As to quaternary structure, monomer. Part of the FGAM synthase complex composed of 1 PurL, 1 PurQ and 2 PurS subunits.

The protein resides in the cytoplasm. It catalyses the reaction N(2)-formyl-N(1)-(5-phospho-beta-D-ribosyl)glycinamide + L-glutamine + ATP + H2O = 2-formamido-N(1)-(5-O-phospho-beta-D-ribosyl)acetamidine + L-glutamate + ADP + phosphate + H(+). The protein operates within purine metabolism; IMP biosynthesis via de novo pathway; 5-amino-1-(5-phospho-D-ribosyl)imidazole from N(2)-formyl-N(1)-(5-phospho-D-ribosyl)glycinamide: step 1/2. In terms of biological role, part of the phosphoribosylformylglycinamidine synthase complex involved in the purines biosynthetic pathway. Catalyzes the ATP-dependent conversion of formylglycinamide ribonucleotide (FGAR) and glutamine to yield formylglycinamidine ribonucleotide (FGAM) and glutamate. The FGAM synthase complex is composed of three subunits. PurQ produces an ammonia molecule by converting glutamine to glutamate. PurL transfers the ammonia molecule to FGAR to form FGAM in an ATP-dependent manner. PurS interacts with PurQ and PurL and is thought to assist in the transfer of the ammonia molecule from PurQ to PurL. The chain is Phosphoribosylformylglycinamidine synthase subunit PurL from Methanosarcina acetivorans (strain ATCC 35395 / DSM 2834 / JCM 12185 / C2A).